Consider the following 133-residue polypeptide: MGVMKEFKEFAVKGNVVDMAVGIVIGAAFGKIVTAFVDGVLMPPIGLMLGGVNFNELALILQEATGEAEAVMINYGIFVQTLVDFIIIAFAIFLVVRGINSLKRKEEAPKTPPGPSKEELLLGEIRDLLKQRS.

Transmembrane regions (helical) follow at residues 10-30 (FAVKGNVVDMAVGIVIGAAFG) and 76-96 (GIFVQTLVDFIIIAFAIFLVV).

It belongs to the MscL family. Homopentamer.

The protein resides in the cell inner membrane. Its function is as follows. Channel that opens in response to stretch forces in the membrane lipid bilayer. May participate in the regulation of osmotic pressure changes within the cell. The chain is Large-conductance mechanosensitive channel from Chlorobium phaeobacteroides (strain BS1).